An 842-amino-acid chain; its full sequence is Non-motile and phage-resistance protein (842 aa).

The next 3 membrane-spanning stretches (helical) occupy residues 29–50 (VFVR…AFGV), 283–303 (GAFS…LLMI), and 343–363 (VYLS…VVSG). Residues 318 to 389 (SERRFRLAVE…QALANAAMYG (72 aa)) enclose the PAS domain. In terms of domain architecture, Histidine kinase spans 607-830 (NMSHELRTPL…TVSFTLPVRH (224 aa)). His-610 bears the Phosphohistidine; by autocatalysis mark.

It localises to the cell membrane. It catalyses the reaction ATP + protein L-histidine = ADP + protein N-phospho-L-histidine.. Member of the two-component regulatory system involved in the regulation of polar organelle development. PleC functions as a membrane-associated protein kinase that transfers phosphate to the response regulator PleD, leading to its activation. The sequence is that of Non-motile and phage-resistance protein (pleC) from Caulobacter vibrioides (strain ATCC 19089 / CIP 103742 / CB 15) (Caulobacter crescentus).